A 292-amino-acid polypeptide reads, in one-letter code: 4-hydroxy-tetrahydrodipicolinate synthase (292 aa).

A pyruvate-binding site is contributed by T45. Y133 functions as the Proton donor/acceptor in the catalytic mechanism. The active-site Schiff-base intermediate with substrate is the K161. I203 provides a ligand contact to pyruvate.

Belongs to the DapA family. As to quaternary structure, homotetramer; dimer of dimers.

The protein resides in the cytoplasm. It carries out the reaction L-aspartate 4-semialdehyde + pyruvate = (2S,4S)-4-hydroxy-2,3,4,5-tetrahydrodipicolinate + H2O + H(+). It participates in amino-acid biosynthesis; L-lysine biosynthesis via DAP pathway; (S)-tetrahydrodipicolinate from L-aspartate: step 3/4. In terms of biological role, catalyzes the condensation of (S)-aspartate-beta-semialdehyde [(S)-ASA] and pyruvate to 4-hydroxy-tetrahydrodipicolinate (HTPA). This is 4-hydroxy-tetrahydrodipicolinate synthase from Salmonella paratyphi A (strain AKU_12601).